A 616-amino-acid chain; its full sequence is Dihydroxy-acid dehydratase (616 aa).

D81 contributes to the Mg(2+) binding site. [2Fe-2S] cluster is bound at residue C122. Residues D123 and K124 each coordinate Mg(2+). K124 carries the post-translational modification N6-carboxylysine. Residue C195 coordinates [2Fe-2S] cluster. E491 is a Mg(2+) binding site. S517 functions as the Proton acceptor in the catalytic mechanism.

This sequence belongs to the IlvD/Edd family. Homodimer. Requires [2Fe-2S] cluster as cofactor. It depends on Mg(2+) as a cofactor.

The enzyme catalyses (2R)-2,3-dihydroxy-3-methylbutanoate = 3-methyl-2-oxobutanoate + H2O. The catalysed reaction is (2R,3R)-2,3-dihydroxy-3-methylpentanoate = (S)-3-methyl-2-oxopentanoate + H2O. It functions in the pathway amino-acid biosynthesis; L-isoleucine biosynthesis; L-isoleucine from 2-oxobutanoate: step 3/4. It participates in amino-acid biosynthesis; L-valine biosynthesis; L-valine from pyruvate: step 3/4. In terms of biological role, functions in the biosynthesis of branched-chain amino acids. Catalyzes the dehydration of (2R,3R)-2,3-dihydroxy-3-methylpentanoate (2,3-dihydroxy-3-methylvalerate) into 2-oxo-3-methylpentanoate (2-oxo-3-methylvalerate) and of (2R)-2,3-dihydroxy-3-methylbutanoate (2,3-dihydroxyisovalerate) into 2-oxo-3-methylbutanoate (2-oxoisovalerate), the penultimate precursor to L-isoleucine and L-valine, respectively. The chain is Dihydroxy-acid dehydratase from Klebsiella pneumoniae (strain 342).